Consider the following 250-residue polypeptide: DNA repair protein RecO (250 aa).

The protein belongs to the RecO family.

Involved in DNA repair and RecF pathway recombination. This Syntrophobacter fumaroxidans (strain DSM 10017 / MPOB) protein is DNA repair protein RecO.